Here is a 507-residue protein sequence, read N- to C-terminus: Glucose-6-phosphate 1-dehydrogenase (507 aa).

NADP(+) contacts are provided by R57 and K168. Substrate-binding residues include H198, K202, E236, and D255. The active-site Proton acceptor is H260. K356 provides a ligand contact to substrate.

Belongs to the glucose-6-phosphate dehydrogenase family.

The catalysed reaction is D-glucose 6-phosphate + NADP(+) = 6-phospho-D-glucono-1,5-lactone + NADPH + H(+). It participates in carbohydrate degradation; pentose phosphate pathway; D-ribulose 5-phosphate from D-glucose 6-phosphate (oxidative stage): step 1/3. In terms of biological role, catalyzes the oxidation of glucose 6-phosphate to 6-phosphogluconolactone. The polypeptide is Glucose-6-phosphate 1-dehydrogenase (Chlamydia muridarum (strain MoPn / Nigg)).